Consider the following 92-residue polypeptide: uncharacterized protein (92 aa).

The next 2 helical transmembrane spans lie at Gly-34–Gly-54 and Leu-65–Val-85.

The protein resides in the cell membrane. This is an uncharacterized protein from Bacillus anthracis.